The sequence spans 680 residues: Galactose oxidase (680 aa).

An N-terminal signal peptide occupies residues 1-24 (MKHLLTLALCFSSINAVAVTVPHK). Positions 25 to 41 (AVGTGIPEGSLQFLSLR) are excised as a propeptide. The F5/8 type C domain occupies 42–189 (ASAPIGSAIS…SIAEINVFQA (148 aa)). Cys-59 and Cys-68 are disulfide-bonded. Kelch repeat units follow at residues 223 to 268 (RVLM…HDMF), 279 to 321 (QIVV…TMSD), 323 to 372 (RVFT…LYRS), 436 to 490 (KILT…VLPD), and 492 to 544 (STFI…LLLP). The 3'-(S-cysteinyl)-tyrosine (Cys-Tyr) cross-link spans 269-313 (CPGISMDGNGQIVVTGGNDAKKTSLYDSSSDSWIPGPDMQVARGY). Tyr-313 is a Cu cation binding site. Positions 536 and 537 each coordinate Cu cation. Tyr-536 (proton acceptor) is an active-site residue. A disulfide bridge links Cys-556 with Cys-559. Residue His-622 coordinates Cu cation.

As to quaternary structure, monomer. Cu(2+) is required as a cofactor. Post-translationally, galactose oxidase contains a protein-derived free radical cofactor. In the active state, Tyr-313, which is cross-linked to Cys-269 via a thioether bond, is oxidized to a radical and acts with Cu(2+) as a two-electron acceptor in the oxidation reaction. The cross-link is believed to modulate the redox potential of the tyrosyl radical, which is further stabilized by a stacking interaction with Trp-331 in the active site. The post-translational formation of the cross-link is closely linked to the propeptide cleavage event, and both are copper-dependent, autocatalytic processes. The propeptide may act as an intramolecular chaperone, facilitating thioester bond formation and copper binding by positioning of active-site residues, including copper ligands.

It localises to the secreted. It catalyses the reaction D-galactose + O2 = D-galacto-hexodialdose + H2O2. Inhibited by diethyldithiocarbamate. In terms of biological role, catalyzes the sterospecific oxidation of primary alcohols to the corresponding aldehydes. The biologically relevant substrate of the enzyme is not known as the enzyme exhibits broad substrate specificity from small alcohols through sugars to oligo- and polysaccharides. The protein is Galactose oxidase (GAOA) of Gibberella zeae (Wheat head blight fungus).